Here is a 433-residue protein sequence, read N- to C-terminus: Alpha-(1,3)-fucosyltransferase 4 (433 aa).

The Cytoplasmic portion of the chain corresponds to 1–52; that stretch reads MAPARQELQHESRCRPSRTVDAWRAAVATRGRHMETPGYRRRTRCGGWGLPR. The chain crosses the membrane as a helical; Signal-anchor for type II membrane protein span at residues 53–74; sequence SVSSLAAVGLLCTALTTFICWG. Residues 75–433 are Lumenal-facing; the sequence is QLPPLPWASP…IHNLADWFQR (359 aa). 2 N-linked (GlcNAc...) asparagine glycosylation sites follow: N117 and N218.

Belongs to the glycosyltransferase 10 family. As to expression, highest expression in stomach and colon. It is also expressed in the lung, testis, uterus, small intestine and to a lesser extent in spleen, and ovary. Present in trace amounts in brain, thymus, heart, smooth muscle, kidney and bone marrow. Not found in liver, salivary gland and pancreas.

It localises to the golgi apparatus. The protein resides in the golgi stack membrane. It carries out the reaction a beta-D-galactosyl-(1-&gt;4)-N-acetyl-beta-D-glucosaminyl derivative + GDP-beta-L-fucose = a beta-D-galactosyl-(1-&gt;4)-[alpha-L-fucosyl-(1-&gt;3)]-N-acetyl-beta-D-glucosaminyl derivative + GDP + H(+). It catalyses the reaction an N-acetyl-alpha-neuraminyl-(2-&gt;3)-beta-D-galactosyl-(1-&gt;4)-N-acetyl-beta-D-glucosaminyl derivative + GDP-beta-L-fucose = an alpha-Neu5Ac-(2-&gt;3)-beta-D-Gal-(1-&gt;4)-[alpha-L-Fuc-(1-&gt;3)]-beta-D-GlcNAc derivative + GDP + H(+). The enzyme catalyses an alpha-Neu5Ac-(2-&gt;3)-beta-D-Gal-(1-&gt;4)-beta-D-GlcNAc-(1-&gt;3)-beta-D-Gal-(1-&gt;4)-beta-D-GlcNAc derivative + GDP-beta-L-fucose = an alpha-Neu5Ac-(2-&gt;3)-beta-D-Gal-(1-&gt;4)-beta-D-GlcNAc-(1-&gt;3)-beta-D-Gal-(1-&gt;4)-[alpha-L-Fuc-(1-&gt;3)]-beta-D-GlcNAc derivative + GDP + H(+). The catalysed reaction is an alpha-Neu5Ac-(2-&gt;3)-beta-D-Gal-(1-&gt;4)-beta-D-GlcNAc6S derivative + GDP-beta-L-fucose = an alpha-Neu5Ac-(2-&gt;3)-beta-D-Gal-(1-&gt;4)-[alpha-L-Fuc-(1-&gt;3)]-beta-D-GlcNAc6S derivative + GDP + H(+). Its pathway is protein modification; protein glycosylation. Its function is as follows. Catalyzes alpha(1-&gt;3) linkage of fucosyl moiety transferred from GDP-beta-L-fucose to N-acetyl glucosamine (GlcNAc) within type 2 lactosamine (LacNAc, Gal-beta(1-&gt;4)GlcNAc) glycan attached to N- or O-linked glycoproteins. Robustly fucosylates nonsialylated distal LacNAc unit of the polylactosamine chain to form Lewis X antigen (CD15), a glycan determinant known to mediate important cellular functions in development and immunity. Fucosylates with lower efficiency sialylated LacNAc acceptors to form sialyl Lewis X and 6-sulfo sialyl Lewis X determinants that serve as recognition epitopes for C-type lectins. Together with FUT7 contributes to SELE, SELL and SELP selectin ligand biosynthesis and selectin-dependent lymphocyte homing, leukocyte migration and blood leukocyte homeostasis. In a cell type specific manner, may also fucosylate the internal LacNAc unit of the polylactosamine chain to form VIM-2 antigen that serves as recognition epitope for SELE. The chain is Alpha-(1,3)-fucosyltransferase 4 (Fut4) from Mus musculus (Mouse).